The primary structure comprises 314 residues: Ferrochelatase (314 aa).

Fe cation contacts are provided by His-184 and Glu-259.

The protein belongs to the ferrochelatase family.

The protein resides in the cytoplasm. The catalysed reaction is heme b + 2 H(+) = protoporphyrin IX + Fe(2+). It participates in porphyrin-containing compound metabolism; protoheme biosynthesis; protoheme from protoporphyrin-IX: step 1/1. Catalyzes the ferrous insertion into protoporphyrin IX. The protein is Ferrochelatase of Chlamydia trachomatis serovar L2 (strain ATCC VR-902B / DSM 19102 / 434/Bu).